Consider the following 933-residue polypeptide: Isoleucine--tRNA ligase (933 aa).

A 'HIGH' region motif is present at residues 57–67 (PYANGNIHMGH). An L-isoleucyl-5'-AMP-binding site is contributed by E556. The short motif at 597–601 (KMSKS) is the 'KMSKS' region element. K600 contacts ATP. Zn(2+) is bound by residues C891, C894, C911, and C914.

This sequence belongs to the class-I aminoacyl-tRNA synthetase family. IleS type 1 subfamily. As to quaternary structure, monomer. The cofactor is Zn(2+).

The protein resides in the cytoplasm. The catalysed reaction is tRNA(Ile) + L-isoleucine + ATP = L-isoleucyl-tRNA(Ile) + AMP + diphosphate. Catalyzes the attachment of isoleucine to tRNA(Ile). As IleRS can inadvertently accommodate and process structurally similar amino acids such as valine, to avoid such errors it has two additional distinct tRNA(Ile)-dependent editing activities. One activity is designated as 'pretransfer' editing and involves the hydrolysis of activated Val-AMP. The other activity is designated 'posttransfer' editing and involves deacylation of mischarged Val-tRNA(Ile). The chain is Isoleucine--tRNA ligase from Pediococcus pentosaceus (strain ATCC 25745 / CCUG 21536 / LMG 10740 / 183-1w).